We begin with the raw amino-acid sequence, 187 residues long: UPF0167 protein MT2352 (187 aa).

Belongs to the UPF0167 family.

The sequence is that of UPF0167 protein MT2352 from Mycobacterium tuberculosis (strain CDC 1551 / Oshkosh).